An 89-amino-acid polypeptide reads, in one-letter code: Strongylocin 2 (89 aa).

The signal sequence occupies residues 1-22 (MNIRTASFTFIVVMMILSQTMA). Positions 23–38 (DRFFNEPEEDDHLVES) are excised as a propeptide. Trp-39 bears the 6'-bromotryptophan mark.

Post-translationally, contains 3 disulfide bonds.

Its function is as follows. Has antimicrobial activity against Gram-negative bacteria and Gram-positive bacteria with minimum inhibitory concentration (MIC) between 0.78 uM and 3.13 uM. The protein is Strongylocin 2 of Echinus esculentus (Sea urchin).